The chain runs to 168 residues: G/U mismatch-specific DNA glycosylase (168 aa).

Belongs to the uracil-DNA glycosylase (UDG) superfamily. TDG/mug family. Binds DNA as a monomer.

It localises to the cytoplasm. The enzyme catalyses Specifically hydrolyzes mismatched double-stranded DNA and polynucleotides, releasing free uracil.. In terms of biological role, excises ethenocytosine and uracil, which can arise by alkylation or deamination of cytosine, respectively, from the corresponding mispairs with guanine in ds-DNA. It is capable of hydrolyzing the carbon-nitrogen bond between the sugar-phosphate backbone of the DNA and the mispaired base. The complementary strand guanine functions in substrate recognition. Required for DNA damage lesion repair in stationary-phase cells. The protein is G/U mismatch-specific DNA glycosylase of Klebsiella pneumoniae (strain 342).